We begin with the raw amino-acid sequence, 92 residues long: uncharacterized protein (92 aa).

Residues 65 to 86 (AVWIFWLCFLVSGLSRAFLVYF) form a helical membrane-spanning segment.

Its subcellular location is the membrane. This is an uncharacterized protein from Treponema pallidum (strain Nichols).